A 524-amino-acid chain; its full sequence is GMP synthase [glutamine-hydrolyzing] (524 aa).

Residues 9-207 (RILILDFGSQ…VIHICQCIPN (199 aa)) enclose the Glutamine amidotransferase type-1 domain. Catalysis depends on C86, which acts as the Nucleophile. Active-site residues include H181 and E183. One can recognise a GMPS ATP-PPase domain in the interval 208–399 (WTTKHIIEDS…LGLPADLIYR (192 aa)). 235–241 (SGGVDSA) contributes to the ATP binding site.

Homodimer.

The enzyme catalyses XMP + L-glutamine + ATP + H2O = GMP + L-glutamate + AMP + diphosphate + 2 H(+). It participates in purine metabolism; GMP biosynthesis; GMP from XMP (L-Gln route): step 1/1. Catalyzes the synthesis of GMP from XMP. The protein is GMP synthase [glutamine-hydrolyzing] of Coxiella burnetii (strain RSA 331 / Henzerling II).